A 392-amino-acid chain; its full sequence is Type III polyketide synthase B (392 aa).

57–64 (KLTRLCKT) contacts CoA. Cys-166 serves as the catalytic Nucleophile. 218–219 (GD) contributes to the substrate binding site. Residues Leu-269, 309–312 (GGPA), and Ala-312 each bind CoA.

It belongs to the thiolase-like superfamily. Chalcone/stilbene synthases family. In terms of assembly, homodimer. Interacts with 4CLL1/ACOS5 and TKPR1. Expressed in flowers and flower buds (at protein level). Mostly confined to anther tapetal cells.

Its subcellular location is the endoplasmic reticulum. It functions in the pathway secondary metabolite biosynthesis; flavonoid biosynthesis. In terms of biological role, plant type III polyketide synthases (PKSs) that catalyzes the condensation of malonyl-CoA units with various CoA ester starter molecules to generate a diverse array of natural products including long-chain alkyl alpha-pyrones. Accepts up to C(20) chain-length fatty acyl CoAs as starter substrates, and carries out sequential condensations with malonyl-CoA to produce triketide and tetraketide alpha-pyrones, potential sporopollenin precursors. Favorite substrates for are midchain- and v-hydroxylated fatty acyl-CoAs (e.g. 12-hydroxyoctadecanoyl-CoA and 16-hydroxyhexadecanoyl-CoA). Required for pollen development and sporopollenin biosynthesis, the major constituent of exine in the outer pollen wall. In vitro, can use 4-coumaroyl-coenzyme A as substrate to produce bis-noryangonin and fatty acyl-coenzyme A as substrate to produce medium-chain alkyl pyrones. May play a role in both the synthesis of pollen fatty acids and phenolics found in exine. The protein is Type III polyketide synthase B of Arabidopsis thaliana (Mouse-ear cress).